The chain runs to 244 residues: MAKRSIWAGDEDNKPKKRETYADDTVGRFHSGYSETNERGKVVPVALDKWRISTGEQSVADAVAQLFGGTPVENEESTSENFIDVFTDRPKVPVIIEADGIHWDMKLWLNGKLKHHCDGFDFVSHADEEMIGQPCGCPKLFDERKAAAKEYDAPNPAITVTFTLADDPELGRFKFQTGSWTLFKVLHEAEDDVERVGKGGAVLANLELELVEYTPKRGPMRNKLVSYYKPTITVLKSYNDAIAD.

The disordered stretch occupies residues 1–34 (MAKRSIWAGDEDNKPKKRETYADDTVGRFHSGYS). Positions 11-27 (EDNKPKKRETYADDTVG) are enriched in basic and acidic residues.

Interacts with the integrase.

In terms of biological role, recombination directionality factor that interacts directly with the integrase tetramer to activate excision and inhibit integration. This chain is Recombination directionality factor, found in Streptomyces coelicolor (Bacteriophage phi-C31).